The primary structure comprises 278 residues: TATA box-binding protein-associated factor RNA polymerase I subunit D (278 aa).

Disordered regions lie at residues 20–71 (ANRS…SSFE) and 88–116 (KKRY…RNPI). Residues 22 to 33 (RSDNSSDSSLFK) are compositionally biased toward polar residues. Serine 23 bears the Phosphoserine mark. Over residues 88 to 99 (KKRYKKKKKRRY) the composition is skewed to basic residues. 2 positions are modified to phosphoserine: serine 138 and serine 234.

In terms of assembly, component of the transcription factor SL1/TIF-IB complex, composed of TBP and at least TAF1A, TAF1B, TAF1C and TAF1D. Interacts with UBTF.

It localises to the nucleus. Functionally, component of the transcription factor SL1/TIF-IB complex, which is involved in the assembly of the PIC (preinitiation complex) during RNA polymerase I-dependent transcription. The rate of PIC formation probably is primarily dependent on the rate of association of SL1/TIF-IB with the rDNA promoter. SL1/TIF-IB is involved in stabilization of nucleolar transcription factor 1/UBTF on rDNA. Formation of SL1/TIF-IB excludes the association of TBP with TFIID subunits. In Homo sapiens (Human), this protein is TATA box-binding protein-associated factor RNA polymerase I subunit D (TAF1D).